The sequence spans 405 residues: Argininosuccinate synthase (405 aa).

An ATP-binding site is contributed by Ala11–Ser19. L-citrulline is bound at residue Tyr90. Gly119 provides a ligand contact to ATP. Thr121, Asn125, and Asp126 together coordinate L-aspartate. L-citrulline is bound at residue Asn125. Residues Arg129, Ser178, Ser187, Glu263, and Tyr275 each contribute to the L-citrulline site.

The protein belongs to the argininosuccinate synthase family. Type 1 subfamily. Homotetramer.

It is found in the cytoplasm. The catalysed reaction is L-citrulline + L-aspartate + ATP = 2-(N(omega)-L-arginino)succinate + AMP + diphosphate + H(+). The protein operates within amino-acid biosynthesis; L-arginine biosynthesis; L-arginine from L-ornithine and carbamoyl phosphate: step 2/3. This is Argininosuccinate synthase from Legionella pneumophila (strain Paris).